A 273-amino-acid chain; its full sequence is MKSTFVRSLFSNLEHMNQDSSTICKFGDCYKLKTLIYPFMSGRKTEKIFTCQDVKKISKGEYGNRLIKIIPKKYIISTNNMRNVEVASEAYYNFVANDIEGIHQLVDYLESANHVFFVYHISRGRTITLQKLIETKYGMKIGPQKDYGTTVLNIFKTVVISSIEMYNHGIFHHKLNSSNILINMNTFSPSITNFNYASFVKDEDWKTIVKNLGILLYELWIGHRPDDNDYDEIKIILNHEDSEIHTGIKNFILTTLTKFVSKNEFNILIENLP.

This is an uncharacterized protein from Acheta domesticus (House cricket).